The primary structure comprises 958 residues: Atromentin synthetase greA (958 aa).

Residues 60–465 are adenylation (A) domain; the sequence is SIQTKTFSAF…SGRIKDTVIV (406 aa). Positions 597 to 675 constitute a Carrier domain; it reads APSTETEKAL…SLANYVNALL (79 aa). The segment at 602–672 is thiolation and peptide carrier (T) domain; sequence TEKALAKIYA…VVSSLANYVN (71 aa). Ser-634 is subject to O-(pantetheine 4'-phosphoryl)serine. The tract at residues 698 to 946 is thioesterase (TE) domain; it reads PIFFVHPGVG…MDFDHVPQFQ (249 aa).

It belongs to the ATP-dependent AMP-binding enzyme family.

Its pathway is secondary metabolite biosynthesis. In terms of biological role, an L-tyrosine:2-oxoglutarate aminotransferase and atromentin synthetase greA catalyze consecutive steps to turn over L-tyrosine into atromentin, which represents the generic precursor molecule for the entire terphenylquinone and pulvinic acid family of pigments, which are widely distributed secondary metabolites in homobasidiomycetes. The first step catalyzed by the aminotransferase converts L-tyrosine in to 4-hydroxyphenylpyruvate (4-HPP). Adenylation of two 4-HPP monomers by the greA adenylation (A) domain, covalent tethering of the monomers as a thioester and oxoester onto the greA thiolation (T) and thioesterase (TE) domains, respectively, and symmetric C-C-bond formation between two monomers catalyzed by the greA TE domain leads to atromentin. The sequence is that of Atromentin synthetase greA (greA) from Suillus grevillei (Larch bolete).